Here is a 515-residue protein sequence, read N- to C-terminus: Bifunctional dihydrofolate reductase-thymidylate synthase (515 aa).

The region spanning Ala-26–Pro-228 is the DHFR domain. Position 30 (Val-30) interacts with substrate. NADP(+)-binding positions include Ala-32, Gly-38–Thr-44, Arg-81–Thr-83, and Leu-101–Arg-104. Residues Ile-154, Tyr-160, and Thr-178 each coordinate substrate. Residue Gly-155–Glu-162 participates in NADP(+) binding. The segment at Glu-233–Val-515 is thymidylate synthase. Position 253 (Arg-253) interacts with dUMP. Cys-395 is a catalytic residue. Residues His-396, Gln-416–Asp-420, Asn-428, and His-458–Tyr-460 contribute to the dUMP site.

The protein in the N-terminal section; belongs to the dihydrofolate reductase family. In the C-terminal section; belongs to the thymidylate synthase family.

The catalysed reaction is (6S)-5,6,7,8-tetrahydrofolate + NADP(+) = 7,8-dihydrofolate + NADPH + H(+). It catalyses the reaction dUMP + (6R)-5,10-methylene-5,6,7,8-tetrahydrofolate = 7,8-dihydrofolate + dTMP. The protein operates within cofactor biosynthesis; tetrahydrofolate biosynthesis; 5,6,7,8-tetrahydrofolate from 7,8-dihydrofolate: step 1/1. Bifunctional enzyme. Involved in de novo dTMP biosynthesis. Key enzyme in folate metabolism. Catalyzes an essential reaction for de novo glycine and purine synthesis, DNA precursor synthesis, and for the conversion of dUMP to dTMP. The protein is Bifunctional dihydrofolate reductase-thymidylate synthase of Crithidia fasciculata.